The sequence spans 370 residues: Glutamate 5-kinase (370 aa).

Lys17 lines the ATP pocket. Positions 56, 143, and 155 each coordinate substrate. ATP is bound at residue 175 to 176 (SD). A PUA domain is found at 280–357 (RGTIRVDAGA…AEIVAILGYS (78 aa)).

Belongs to the glutamate 5-kinase family.

Its subcellular location is the cytoplasm. The catalysed reaction is L-glutamate + ATP = L-glutamyl 5-phosphate + ADP. It functions in the pathway amino-acid biosynthesis; L-proline biosynthesis; L-glutamate 5-semialdehyde from L-glutamate: step 1/2. Its function is as follows. Catalyzes the transfer of a phosphate group to glutamate to form L-glutamate 5-phosphate. This chain is Glutamate 5-kinase, found in Cereibacter sphaeroides (strain ATCC 17023 / DSM 158 / JCM 6121 / CCUG 31486 / LMG 2827 / NBRC 12203 / NCIMB 8253 / ATH 2.4.1.) (Rhodobacter sphaeroides).